Consider the following 319-residue polypeptide: Cytochrome f (319 aa).

An N-terminal signal peptide occupies residues 1 to 34 (MQNRNTYEWAKKMTRLISVLVMIHIITRTSISNA). 4 residues coordinate heme: tyrosine 35, cysteine 55, cysteine 58, and histidine 59. A helical transmembrane segment spans residues 287 to 304 (GLLLFLASVILAQIFLVL).

The protein belongs to the cytochrome f family. The 4 large subunits of the cytochrome b6-f complex are cytochrome b6, subunit IV (17 kDa polypeptide, petD), cytochrome f and the Rieske protein, while the 4 small subunits are PetG, PetL, PetM and PetN. The complex functions as a dimer. Requires heme as cofactor.

The protein localises to the plastid. It localises to the chloroplast thylakoid membrane. Component of the cytochrome b6-f complex, which mediates electron transfer between photosystem II (PSII) and photosystem I (PSI), cyclic electron flow around PSI, and state transitions. The protein is Cytochrome f (petA) of Pinus thunbergii (Japanese black pine).